A 177-amino-acid chain; its full sequence is 3-hydroxydecanoyl-[acyl-carrier-protein] dehydratase (177 aa).

Residue His-71 is part of the active site.

It belongs to the thioester dehydratase family. FabA subfamily. In terms of assembly, homodimer.

Its subcellular location is the cytoplasm. It carries out the reaction a (3R)-hydroxyacyl-[ACP] = a (2E)-enoyl-[ACP] + H2O. The enzyme catalyses (3R)-hydroxydecanoyl-[ACP] = (2E)-decenoyl-[ACP] + H2O. It catalyses the reaction (2E)-decenoyl-[ACP] = (3Z)-decenoyl-[ACP]. It functions in the pathway lipid metabolism; fatty acid biosynthesis. Necessary for the introduction of cis unsaturation into fatty acids. Catalyzes the dehydration of (3R)-3-hydroxydecanoyl-ACP to E-(2)-decenoyl-ACP and then its isomerization to Z-(3)-decenoyl-ACP. Can catalyze the dehydratase reaction for beta-hydroxyacyl-ACPs with saturated chain lengths up to 16:0, being most active on intermediate chain length. This is 3-hydroxydecanoyl-[acyl-carrier-protein] dehydratase from Wigglesworthia glossinidia brevipalpis.